The chain runs to 192 residues: uncharacterized protein (192 aa).

Positions 1 to 17 (MFLHLILLAGLAPVVYL) are cleaved as a signal peptide.

This is an uncharacterized protein from Caenorhabditis elegans.